A 239-amino-acid chain; its full sequence is Probable 2-phosphosulfolactate phosphatase (239 aa).

This sequence belongs to the ComB family. Requires Mg(2+) as cofactor.

It catalyses the reaction (2R)-O-phospho-3-sulfolactate + H2O = (2R)-3-sulfolactate + phosphate. This chain is Probable 2-phosphosulfolactate phosphatase, found in Clostridium botulinum (strain Langeland / NCTC 10281 / Type F).